Consider the following 170-residue polypeptide: Helix-loop-helix protein 3 (170 aa).

Residues 1–26 (MTASTSSTPSTSTKIPSSSKSSVTKQ) are compositionally biased toward low complexity. Disordered stretches follow at residues 1 to 42 (MTAS…VDQV) and 118 to 170 (TPSP…TETY). Positions 26–39 (QTKQKRNERERKRV) are basic motif; degenerate. The region spanning 26–79 (QTKQKRNERERKRVDQVNQGFVLLQERVPKAAGNKAKLSKVETLREAARYIQEL) is the bHLH domain. The segment covering 30 to 40 (KRNERERKRVD) has biased composition (basic and acidic residues). The interval 40–79 (DQVNQGFVLLQERVPKAAGNKAKLSKVETLREAARYIQEL) is helix-loop-helix motif. Low complexity predominate over residues 143–157 (SHYYQESSSSSASTS).

Efficient DNA binding requires dimerization with another bHLH protein. Forms a heterodimer with hlh-2. As to expression, expressed in the ADL sensory neurons.

It localises to the nucleus. In terms of biological role, probable transcriptional regulator. May mediate transcriptional activation by binding to the E-box motif 5'-CANNTG-3'. Plays a role in the differentiation of the hermaphrodite-specific motor neurons (HSN) that are required for normal egg laying. Might play a role in serotonin production by regulating expression of the tryptophan hydrolase tph-1 which catalyzes serotonin synthesis, in the HSN neurons. Also plays a role in HSN axon guidance towards the vulva and the ventral nerve cord, possibly by promoting the expression of the netrin receptor unc-40. Under feeding conditions, involved in the regulation of the srh-234 chemoreceptor encoding gene expression in the ADL sensory neurons. Together with hlh-2, involved in the induction of programmed cell death in the sister cells of the serotonergic neurosecretory motor (NSM) neurons, probably through the activation of egl-1 transcription. The polypeptide is Helix-loop-helix protein 3 (Caenorhabditis elegans).